A 723-amino-acid polypeptide reads, in one-letter code: Translation initiation factor IF-2 (723 aa).

The disordered stretch occupies residues Lys112–Lys138. Basic residues predominate over residues Phe114–Lys123. The tr-type G domain occupies Glu224 to Lys393. Positions Gly233–Thr240 are G1. GTP is bound at residue Gly233 to Thr240. The tract at residues Gly258–His262 is G2. A G3 region spans residues Asp279–Gly282. GTP-binding positions include Asp279–His283 and Asn333–Asp336. A G4 region spans residues Asn333 to Asp336. The interval Ser369–Leu371 is G5.

The protein belongs to the TRAFAC class translation factor GTPase superfamily. Classic translation factor GTPase family. IF-2 subfamily.

It localises to the cytoplasm. Functionally, one of the essential components for the initiation of protein synthesis. Protects formylmethionyl-tRNA from spontaneous hydrolysis and promotes its binding to the 30S ribosomal subunits. Also involved in the hydrolysis of GTP during the formation of the 70S ribosomal complex. The sequence is that of Translation initiation factor IF-2 from Anoxybacillus flavithermus (strain DSM 21510 / WK1).